A 258-amino-acid polypeptide reads, in one-letter code: tRNA pseudouridine synthase A (258 aa).

The active-site Nucleophile is the aspartate 52. Tyrosine 110 contacts substrate.

It belongs to the tRNA pseudouridine synthase TruA family. In terms of assembly, homodimer.

The enzyme catalyses uridine(38/39/40) in tRNA = pseudouridine(38/39/40) in tRNA. In terms of biological role, formation of pseudouridine at positions 38, 39 and 40 in the anticodon stem and loop of transfer RNAs. In Francisella tularensis subsp. novicida (strain U112), this protein is tRNA pseudouridine synthase A.